A 544-amino-acid chain; its full sequence is Cytochrome P450 2U1 (544 aa).

Transmembrane regions (helical) follow at residues 30 to 50 (LDPSGGALLLCGLVALLGWSW), 113 to 133 (VYGSIFSFFIGHYLVVVLSDF), 261 to 281 (ICLNSQVLLVNICPWLYYLPF), and 342 to 362 (LFYIIGDLFIAGTDTTTNSLL). Cysteine 490 serves as a coordination point for heme. Residues 495-515 (LAKMELFLMFVSLMQSFAFAL) traverse the membrane as a helical segment.

The protein belongs to the cytochrome P450 family. Heme is required as a cofactor. As to expression, widely expressed with stronger expression in thymus, heart and cerebellum.

It is found in the endoplasmic reticulum membrane. It localises to the microsome membrane. The protein resides in the mitochondrion inner membrane. It catalyses the reaction an omega-methyl-long-chain fatty acid + reduced [NADPH--hemoprotein reductase] + O2 = an omega-hydroxy-long-chain fatty acid + oxidized [NADPH--hemoprotein reductase] + H2O + H(+). It carries out the reaction (5Z,8Z,11Z,14Z)-eicosatetraenoate + reduced [NADPH--hemoprotein reductase] + O2 = 19-hydroxy-(5Z,8Z,11Z,14Z)-eicosatetraenoate + oxidized [NADPH--hemoprotein reductase] + H2O + H(+). The enzyme catalyses (5Z,8Z,11Z,14Z)-eicosatetraenoate + reduced [NADPH--hemoprotein reductase] + O2 = 20-hydroxy-(5Z,8Z,11Z,14Z)-eicosatetraenoate + oxidized [NADPH--hemoprotein reductase] + H2O + H(+). The catalysed reaction is N-[(5Z,8Z,11Z,14Z)-eicosatetraenoyl]-serotonin + reduced [NADPH--hemoprotein reductase] + O2 = 2-oxo-N-[(5Z,8Z,11Z,14Z)-eicosatetraenoyl]-serotonin + oxidized [NADPH--hemoprotein reductase] + H2O + H(+). The protein operates within lipid metabolism; arachidonate metabolism. In terms of biological role, a cytochrome P450 monooxygenase involved in the metabolism of arachidonic acid and its conjugates. Mechanistically, uses molecular oxygen inserting one oxygen atom into a substrate, and reducing the second into a water molecule, with two electrons provided by NADPH via cytochrome P450 reductase (CPR; NADPH-ferrihemoprotein reductase). Acts as an omega and omega-1 hydroxylase for arachidonic acid and possibly for other long chain fatty acids. May modulate the arachidonic acid signaling pathway and play a role in other fatty acid signaling processes. May down-regulate the biological activities of N-arachidonoyl-serotonin, an endocannabinoid that has anti-nociceptive effects through inhibition of fatty acid amide hydrolase FAAH, TRPV1 receptor and T-type calcium channels. Catalyzes C-2 oxidation of the indole ring of N-arachidonoyl-serotonin forming a less active product 2-oxo-N-arachidonoyl-serotonin. The sequence is that of Cytochrome P450 2U1 from Homo sapiens (Human).